The chain runs to 419 residues: UDP-N-acetylglucosamine 1-carboxyvinyltransferase 2 (419 aa).

Position 22–23 (22–23 (KN)) interacts with phosphoenolpyruvate. Residue Arg92 participates in UDP-N-acetyl-alpha-D-glucosamine binding. Cys116 functions as the Proton donor in the catalytic mechanism. A 2-(S-cysteinyl)pyruvic acid O-phosphothioketal modification is found at Cys116. UDP-N-acetyl-alpha-D-glucosamine is bound by residues 121 to 125 (RPIDL), Asp306, and Ile328.

It belongs to the EPSP synthase family. MurA subfamily.

Its subcellular location is the cytoplasm. The enzyme catalyses phosphoenolpyruvate + UDP-N-acetyl-alpha-D-glucosamine = UDP-N-acetyl-3-O-(1-carboxyvinyl)-alpha-D-glucosamine + phosphate. Its pathway is cell wall biogenesis; peptidoglycan biosynthesis. Its function is as follows. Cell wall formation. Adds enolpyruvyl to UDP-N-acetylglucosamine. This is UDP-N-acetylglucosamine 1-carboxyvinyltransferase 2 from Streptococcus pneumoniae (strain ATCC BAA-255 / R6).